The following is a 353-amino-acid chain: Rhodopsin (353 aa).

The Extracellular segment spans residues 1–36; sequence MNGTEGPYFYIPMVNTTGIVRSPYEYPQYYLVNPAA. N-linked (GlcNAc...) asparagine glycosylation is found at asparagine 2 and asparagine 15. A helical membrane pass occupies residues 37–61; the sequence is YAALGAYMFLLILIGFPVNFLTLYV. Residues 62 to 73 lie on the Cytoplasmic side of the membrane; that stretch reads TIEHKKLRTPLN. The chain crosses the membrane as a helical span at residues 74 to 96; that stretch reads YILLNLAVADLFMVFGGFTTTMY. Topologically, residues 97–110 are extracellular; the sequence is TSMHGYFVLGRLGC. A disulfide bridge connects residues cysteine 110 and cysteine 187. The helical transmembrane segment at 111–133 threads the bilayer; it reads NLEGFFATLGGEIALWSLVVLAV. The short motif at 134-136 is the 'Ionic lock' involved in activated form stabilization element; the sequence is ERW. Topologically, residues 134 to 152 are cytoplasmic; that stretch reads ERWMVVCKPISNFRFGEDH. The helical transmembrane segment at 153–173 threads the bilayer; sequence AIMGLAFTWVMAAACAVPPLV. Over 174 to 202 the chain is Extracellular; it reads GWSRYIPEGMQCSCGIDYYTRAEGFNNES. Residue asparagine 200 is glycosylated (N-linked (GlcNAc...) asparagine). The chain crosses the membrane as a helical span at residues 203–224; the sequence is FVIYMFVCHFLIPLVVVFFCYG. Over 225–252 the chain is Cytoplasmic; that stretch reads RLLCAVKEAAAAQQESETTQRAEREVSR. The helical transmembrane segment at 253–274 threads the bilayer; that stretch reads MVVIMVVAFLVCWCPYAGVAWY. Topologically, residues 275–286 are extracellular; sequence IFTHQGSEFGPL. The chain crosses the membrane as a helical span at residues 287-308; the sequence is FMTFPAFFAKSSSIYNPMIYIC. Lysine 296 carries the N6-(retinylidene)lysine modification. Residues 309 to 353 are Cytoplasmic-facing; it reads MNKQFRQCMITTLCCGKNPFEEEEGASTTSKTEASSVSSSSVSPA. 2 S-palmitoyl cysteine lipidation sites follow: cysteine 322 and cysteine 323. The tract at residues 329 to 353 is disordered; that stretch reads EEEEGASTTSKTEASSVSSSSVSPA. The span at 334–353 shows a compositional bias: low complexity; sequence ASTTSKTEASSVSSSSVSPA.

The protein belongs to the G-protein coupled receptor 1 family. Opsin subfamily. Phosphorylated on some or all of the serine and threonine residues present in the C-terminal region. Post-translationally, contains one covalently linked retinal chromophore.

The protein resides in the membrane. The protein localises to the cell projection. It localises to the cilium. Its subcellular location is the photoreceptor outer segment. Functionally, photoreceptor required for image-forming vision at low light intensity. While most salt water fish species use retinal as chromophore, most freshwater fish use 3-dehydroretinal, or a mixture of retinal and 3-dehydroretinal. Light-induced isomerization of 11-cis to all-trans retinal triggers a conformational change that activates signaling via G-proteins. Subsequent receptor phosphorylation mediates displacement of the bound G-protein alpha subunit by arrestin and terminates signaling. The protein is Rhodopsin (rho) of Chelon auratus (Golden grey mullet).